Here is a 222-residue protein sequence, read N- to C-terminus: Disulfide bond formation protein D (222 aa).

The signal sequence occupies residues 1-36; sequence MKKKQQSSAKFAVILTVVVVVLLAAIVIINNKTEQG. One can recognise a Thioredoxin domain in the interval 37-220; that stretch reads NDAVSGQPSI…IKETIEKELK (184 aa). Cys-69 and Cys-72 are oxidised to a cystine.

This sequence belongs to the thioredoxin family. DsbA subfamily.

The protein localises to the cell membrane. Its subcellular location is the membrane raft. Functionally, required for the stabilization, possibly via formation of a disulfide bond, of the obligatory competence protein ComGC. May be required for the stability of secreted proteins with disulfide bonds. Not required for sporulation. The protein is Disulfide bond formation protein D (bdbD) of Bacillus subtilis (strain 168).